The chain runs to 229 residues: MSVSLSRLERQLGYTFKDQELMVLALTHRSFAGRNNERLEFLGDAILNFVAGEALFERFPQAREGQLSRLRARLVKGETLALLARGFDLGEYLRLGSGELKSGGFRRESILADALEALIGAIYLDAGMEAARERVLAWLTTEFDSLTLVDTNKDPKTRLQEFLQSRACELPRYEVVDIQGEPHCRTFFVECEINLLNEKSRGQGVSRRIAEQVAAAAALIALGVENGHE.

The 123-residue stretch at 5–127 (LSRLERQLGY…LIGAIYLDAG (123 aa)) folds into the RNase III domain. Glu40 serves as a coordination point for Mg(2+). The active site involves Asp44. Positions 113 and 116 each coordinate Mg(2+). Residue Glu116 is part of the active site. The region spanning 154-224 (DPKTRLQEFL…AAAALIALGV (71 aa)) is the DRBM domain.

It belongs to the ribonuclease III family. Homodimer. It depends on Mg(2+) as a cofactor.

It is found in the cytoplasm. The catalysed reaction is Endonucleolytic cleavage to 5'-phosphomonoester.. Digests double-stranded RNA. Involved in the processing of primary rRNA transcript to yield the immediate precursors to the large and small rRNAs (23S and 16S). Processes some mRNAs, and tRNAs when they are encoded in the rRNA operon. Processes pre-crRNA and tracrRNA of type II CRISPR loci if present in the organism. The protein is Ribonuclease 3 of Pseudomonas syringae pv. syringae (strain B728a).